A 201-amino-acid polypeptide reads, in one-letter code: Large ribosomal subunit protein uL4 (201 aa).

Residues 44–71 (RAQKTRAEVSGSGKKPWRQKGTGRARSG) are disordered.

Belongs to the universal ribosomal protein uL4 family. As to quaternary structure, part of the 50S ribosomal subunit.

One of the primary rRNA binding proteins, this protein initially binds near the 5'-end of the 23S rRNA. It is important during the early stages of 50S assembly. It makes multiple contacts with different domains of the 23S rRNA in the assembled 50S subunit and ribosome. Its function is as follows. Forms part of the polypeptide exit tunnel. The sequence is that of Large ribosomal subunit protein uL4 from Photorhabdus laumondii subsp. laumondii (strain DSM 15139 / CIP 105565 / TT01) (Photorhabdus luminescens subsp. laumondii).